Consider the following 1121-residue polypeptide: Cilia- and flagella-associated protein 70 (1121 aa).

Over residues 410–428 (NLKEDKPVKEKDIDGRPRP) the composition is skewed to basic and acidic residues. The tract at residues 410–457 (NLKEDKPVKEKDIDGRPRPGDVQAPSIKSQSSDTPLEGEPPLSHNPEG) is disordered. TPR repeat units follow at residues 635 to 668 (SEQLQLFAFEAEVNENFEMAAAYYKERLVREPQN), 669 to 702 (LDHWLDYGAFCLLTEDNIKAQECFQKALSLNQSH), and 704 to 736 (HSLLLCGVLAVLLENYEQAEIFFEDATCLEPTN). 2 disordered regions span residues 778-802 (KQKSTGVEDTEERGKRESSLGPWGI) and 836-858 (QSDSQEPILTTQTWDPSISQKPS). 5 TPR repeats span residues 929–962 (CEYYLVLAQTHILKKNFAKAEEYLQQAAQMDYLN), 963–996 (PNVWGLKGHLYFLSGNHSEAKACYERTISFVVDA), 1000–1033 (HFIFLRLGLIYLEEKEYEKAKKTYMQACKRSPSC), 1035–1066 (TWLGLGIACYRLEELTEAEDALSEANALNNYN), and 1068–1100 (EVWAYLALVCLKVGRQLEAEQAYKYMIKLKLKD).

This sequence belongs to the CFAP70 family. As to expression, expressed in testis.

The protein localises to the cell projection. Its subcellular location is the cilium. It is found in the flagellum. The protein resides in the cytoplasm. It localises to the cytoskeleton. The protein localises to the flagellum basal body. Its subcellular location is the cilium axoneme. Its function is as follows. Axoneme-binding protein that plays a role in the regulation of ciliary motility and cilium length. This is Cilia- and flagella-associated protein 70 from Homo sapiens (Human).